Here is a 218-residue protein sequence, read N- to C-terminus: MTQDEMKKAAGWAALQYVEEGSIVGVGTGSTVNHFIDALGTMKDKIKGAVSSSIASTEKLEALEIKVFECNDVFKLDIYVDGADEINGSRDMIKGGGAALTREKIVAAISDKFICIVDGTKAVDVLGKFPLPVEVIPMARSYVARELVKLGGDPVYREGCTTDNGNVILDVYGMAIENPKQLEDIINGIAGVVTVGLFAHRGADVVITGTPEGAKIEE.

Substrate is bound by residues 28 to 31 (TGST), 81 to 84 (DGAD), and 94 to 97 (KGGG). Catalysis depends on Glu-103, which acts as the Proton acceptor. Lys-121 is a binding site for substrate.

Belongs to the ribose 5-phosphate isomerase family. In terms of assembly, homodimer.

The enzyme catalyses aldehydo-D-ribose 5-phosphate = D-ribulose 5-phosphate. It functions in the pathway carbohydrate degradation; pentose phosphate pathway; D-ribose 5-phosphate from D-ribulose 5-phosphate (non-oxidative stage): step 1/1. In terms of biological role, catalyzes the reversible conversion of ribose-5-phosphate to ribulose 5-phosphate. This is Ribose-5-phosphate isomerase A from Vibrio atlanticus (strain LGP32) (Vibrio splendidus (strain Mel32)).